The sequence spans 240 residues: Large ribosomal subunit protein uL2 (240 aa).

A compositionally biased stretch (polar residues) spans 1 to 10; it reads MGHRISTQSR. Disordered regions lie at residues 1–20 and 204–240; these read MGHR…YRAP and FGGG…GYRR.

Belongs to the universal ribosomal protein uL2 family. As to quaternary structure, part of the 50S ribosomal subunit. Forms a bridge to the 30S subunit in the 70S ribosome.

One of the primary rRNA binding proteins. Required for association of the 30S and 50S subunits to form the 70S ribosome, for tRNA binding and peptide bond formation. It has been suggested to have peptidyltransferase activity; this is somewhat controversial. Makes several contacts with the 16S rRNA in the 70S ribosome. The chain is Large ribosomal subunit protein uL2 from Methanocorpusculum labreanum (strain ATCC 43576 / DSM 4855 / Z).